Reading from the N-terminus, the 160-residue chain is SsrA-binding protein (160 aa).

The protein belongs to the SmpB family.

It localises to the cytoplasm. In terms of biological role, required for rescue of stalled ribosomes mediated by trans-translation. Binds to transfer-messenger RNA (tmRNA), required for stable association of tmRNA with ribosomes. tmRNA and SmpB together mimic tRNA shape, replacing the anticodon stem-loop with SmpB. tmRNA is encoded by the ssrA gene; the 2 termini fold to resemble tRNA(Ala) and it encodes a 'tag peptide', a short internal open reading frame. During trans-translation Ala-aminoacylated tmRNA acts like a tRNA, entering the A-site of stalled ribosomes, displacing the stalled mRNA. The ribosome then switches to translate the ORF on the tmRNA; the nascent peptide is terminated with the 'tag peptide' encoded by the tmRNA and targeted for degradation. The ribosome is freed to recommence translation, which seems to be the essential function of trans-translation. The chain is SsrA-binding protein from Escherichia coli O6:K15:H31 (strain 536 / UPEC).